The following is a 231-amino-acid chain: Aquaporin Z (231 aa).

2 helical membrane-spanning segments follow: residues 9 to 29 (CFGTFWLVFGGCGSAVLAAGF) and 34 to 54 (IGFAGVALAFGLTVLTMAFAV). The NPA 1 signature appears at 63-65 (NPA). The next 3 helical transmembrane spans lie at 82–102 (VGYVIAQVVGGIVAAALLYLI), 129–149 (YSMLSALVVELVLSAGFLLVI), and 156–176 (FAPAGFAPIAIGLALTLIHLI). Positions 186–188 (NPA) match the NPA 2 motif. Residues 202–222 (LEQLWFFWVVPIVGGIIGGLI) form a helical membrane-spanning segment.

This sequence belongs to the MIP/aquaporin (TC 1.A.8) family. In terms of assembly, homotetramer.

The protein localises to the cell inner membrane. The enzyme catalyses H2O(in) = H2O(out). In terms of biological role, channel that permits osmotically driven movement of water in both directions. It is involved in the osmoregulation and in the maintenance of cell turgor during volume expansion in rapidly growing cells. It mediates rapid entry or exit of water in response to abrupt changes in osmolarity. The protein is Aquaporin Z of Escherichia coli O157:H7.